Here is a 285-residue protein sequence, read N- to C-terminus: Putative alkaline ceramidase dcd3B (285 aa).

The next 3 membrane-spanning stretches (helical) occupy residues Thr-34–Ala-54, Val-77–Thr-97, and Leu-104–Ile-124. A glycan (N-linked (GlcNAc...) asparagine) is linked at Asn-131. The next 4 helical transmembrane spans lie at Arg-141–Ile-161, Ile-166–Tyr-186, Pro-200–Thr-220, and Leu-236–Ile-256.

This sequence belongs to the alkaline ceramidase family.

The protein resides in the membrane. This Dictyostelium discoideum (Social amoeba) protein is Putative alkaline ceramidase dcd3B (dcd3B).